Reading from the N-terminus, the 246-residue chain is 4-hydroxy-tetrahydrodipicolinate reductase (246 aa).

NAD(+)-binding positions include 8–13 (GALGRM), aspartate 34, 74–76 (GTT), and 101–104 (APNF). The Proton donor/acceptor role is filled by histidine 131. Residue histidine 132 participates in (S)-2,3,4,5-tetrahydrodipicolinate binding. Lysine 135 functions as the Proton donor in the catalytic mechanism. Position 141-142 (141-142 (GT)) interacts with (S)-2,3,4,5-tetrahydrodipicolinate.

It belongs to the DapB family.

Its subcellular location is the cytoplasm. The enzyme catalyses (S)-2,3,4,5-tetrahydrodipicolinate + NAD(+) + H2O = (2S,4S)-4-hydroxy-2,3,4,5-tetrahydrodipicolinate + NADH + H(+). The catalysed reaction is (S)-2,3,4,5-tetrahydrodipicolinate + NADP(+) + H2O = (2S,4S)-4-hydroxy-2,3,4,5-tetrahydrodipicolinate + NADPH + H(+). Its pathway is amino-acid biosynthesis; L-lysine biosynthesis via DAP pathway; (S)-tetrahydrodipicolinate from L-aspartate: step 4/4. Catalyzes the conversion of 4-hydroxy-tetrahydrodipicolinate (HTPA) to tetrahydrodipicolinate. The sequence is that of 4-hydroxy-tetrahydrodipicolinate reductase from Thermobifida fusca (strain YX).